The chain runs to 229 residues: 5'-methylthioadenosine/S-adenosylhomocysteine nucleosidase (229 aa).

Glu-12 functions as the Proton acceptor in the catalytic mechanism. Substrate-binding positions include Gly-78, Ile-152, and 173–174 (ME). Asp-197 functions as the Proton donor in the catalytic mechanism.

The protein belongs to the PNP/UDP phosphorylase family. MtnN subfamily.

It carries out the reaction S-adenosyl-L-homocysteine + H2O = S-(5-deoxy-D-ribos-5-yl)-L-homocysteine + adenine. The enzyme catalyses S-methyl-5'-thioadenosine + H2O = 5-(methylsulfanyl)-D-ribose + adenine. It catalyses the reaction 5'-deoxyadenosine + H2O = 5-deoxy-D-ribose + adenine. It participates in amino-acid biosynthesis; L-methionine biosynthesis via salvage pathway; S-methyl-5-thio-alpha-D-ribose 1-phosphate from S-methyl-5'-thioadenosine (hydrolase route): step 1/2. Functionally, catalyzes the irreversible cleavage of the glycosidic bond in both 5'-methylthioadenosine (MTA) and S-adenosylhomocysteine (SAH/AdoHcy) to adenine and the corresponding thioribose, 5'-methylthioribose and S-ribosylhomocysteine, respectively. Also cleaves 5'-deoxyadenosine, a toxic by-product of radical S-adenosylmethionine (SAM) enzymes, into 5-deoxyribose and adenine. In Histophilus somni (strain 2336) (Haemophilus somnus), this protein is 5'-methylthioadenosine/S-adenosylhomocysteine nucleosidase.